A 98-amino-acid chain; its full sequence is Aspartyl/glutamyl-tRNA(Asn/Gln) amidotransferase subunit C (98 aa).

Belongs to the GatC family. Heterotrimer of A, B and C subunits.

The catalysed reaction is L-glutamyl-tRNA(Gln) + L-glutamine + ATP + H2O = L-glutaminyl-tRNA(Gln) + L-glutamate + ADP + phosphate + H(+). It catalyses the reaction L-aspartyl-tRNA(Asn) + L-glutamine + ATP + H2O = L-asparaginyl-tRNA(Asn) + L-glutamate + ADP + phosphate + 2 H(+). In terms of biological role, allows the formation of correctly charged Asn-tRNA(Asn) or Gln-tRNA(Gln) through the transamidation of misacylated Asp-tRNA(Asn) or Glu-tRNA(Gln) in organisms which lack either or both of asparaginyl-tRNA or glutaminyl-tRNA synthetases. The reaction takes place in the presence of glutamine and ATP through an activated phospho-Asp-tRNA(Asn) or phospho-Glu-tRNA(Gln). The polypeptide is Aspartyl/glutamyl-tRNA(Asn/Gln) amidotransferase subunit C (Microcystis aeruginosa (strain NIES-843 / IAM M-2473)).